Reading from the N-terminus, the 467-residue chain is Cysteine--tRNA ligase (467 aa).

A Zn(2+)-binding site is contributed by Cys29. Residues 31–41 carry the 'HIGH' region motif; the sequence is PTVYDDSHLGH. The disordered stretch occupies residues 155-174; sequence KLSGRGEDLEQVSRIESSEE. A compositionally biased stretch (basic and acidic residues) spans 158-174; sequence GRGEDLEQVSRIESSEE. Zn(2+) contacts are provided by Cys210, His239, and Glu243. Residues 271–275 carry the 'KMSKS' region motif; sequence KMSKS. Residue Lys274 coordinates ATP.

It belongs to the class-I aminoacyl-tRNA synthetase family. In terms of assembly, monomer. Requires Zn(2+) as cofactor.

Its subcellular location is the cytoplasm. It catalyses the reaction tRNA(Cys) + L-cysteine + ATP = L-cysteinyl-tRNA(Cys) + AMP + diphosphate. The polypeptide is Cysteine--tRNA ligase (Wolinella succinogenes (strain ATCC 29543 / DSM 1740 / CCUG 13145 / JCM 31913 / LMG 7466 / NCTC 11488 / FDC 602W) (Vibrio succinogenes)).